The primary structure comprises 221 residues: Pectate lyase C (221 aa).

Positions 1–28 are cleaved as a signal peptide; sequence MKRLAGTVILSGLLVCGFGQALPEKALA.

Belongs to the polysaccharide lyase 3 family. Ca(2+) is required as a cofactor.

It is found in the secreted. It catalyses the reaction Eliminative cleavage of (1-&gt;4)-alpha-D-galacturonan to give oligosaccharides with 4-deoxy-alpha-D-galact-4-enuronosyl groups at their non-reducing ends.. The catalysed reaction is Eliminative cleavage of (1-&gt;4)-alpha-D-galacturonan methyl ester to give oligosaccharides with 4-deoxy-6-O-methyl-alpha-D-galact-4-enuronosyl groups at their non-reducing ends.. It participates in glycan metabolism; pectin degradation; 2-dehydro-3-deoxy-D-gluconate from pectin: step 2/5. Functionally, catalyzes the depolymerization of both polygalacturonate and pectins of methyl esterification degree from 22 to 89%, with an endo mode of action. In contrast to the majority of pectate lyases, displays high activity on highly methylated pectins. The polypeptide is Pectate lyase C (pelC) (Bacillus licheniformis (strain ATCC 14580 / DSM 13 / JCM 2505 / CCUG 7422 / NBRC 12200 / NCIMB 9375 / NCTC 10341 / NRRL NRS-1264 / Gibson 46)).